The sequence spans 350 residues: Probable nicotinate-nucleotide adenylyltransferase/Ap4A hydrolase (350 aa).

Residues 1 to 187 (MKQKIIIFGG…YINTNHLYLI (187 aa)) form a naMN adenylyltransferase region. The ap4A hydrolase stretch occupies residues 196 to 350 (DKRFQHCLRV…LKYVQNLVKD (155 aa)). Positions 198–310 (RFQHCLRVGK…VYLADKLEPN (113 aa)) constitute an HD domain. His201 lines the ADP pocket. His201, His230, and Asp231 together coordinate Fe cation. Residues 231 to 234 (DLAK), His261, 287 to 288 (HT), Asp305, and Arg311 each bind ADP. Asp305 provides a ligand contact to Fe cation.

In the N-terminal section; belongs to the NadD family. This sequence in the C-terminal section; belongs to the Ap4A hydrolase YqeK family.

It catalyses the reaction nicotinate beta-D-ribonucleotide + ATP + H(+) = deamido-NAD(+) + diphosphate. The enzyme catalyses P(1),P(4)-bis(5'-adenosyl) tetraphosphate + H2O = 2 ADP + 2 H(+). It participates in cofactor biosynthesis; NAD(+) biosynthesis; deamido-NAD(+) from nicotinate D-ribonucleotide: step 1/1. Functionally, catalyzes the reversible adenylation of nicotinate mononucleotide (NaMN) to nicotinic acid adenine dinucleotide (NaAD). Hydrolyzes diadenosine 5',5'''-P1,P4-tetraphosphate (Ap4A) to yield ADP. The polypeptide is Probable nicotinate-nucleotide adenylyltransferase/Ap4A hydrolase (Mycoplasma genitalium (strain ATCC 33530 / DSM 19775 / NCTC 10195 / G37) (Mycoplasmoides genitalium)).